The following is a 230-amino-acid chain: uncharacterized protein (230 aa).

The next 7 membrane-spanning stretches (helical) occupy residues 34 to 54 (FFAG…MNFQ), 56 to 76 (VVQY…GLMF), 87 to 107 (MLFA…GMVI), 111 to 131 (GLGA…LMSV), 146 to 166 (MLFI…FLGS), 167 to 187 (PMFQ…YIAY), and 205 to 225 (VSLY…IGIF).

It belongs to the BI1 family.

It is found in the cell membrane. This is an uncharacterized protein from Helicobacter pylori (strain J99 / ATCC 700824) (Campylobacter pylori J99).